Here is a 368-residue protein sequence, read N- to C-terminus: Cytochrome b (368 aa).

Transmembrane regions (helical) follow at residues 32 to 52 (FGFL…TLAF), 76 to 98 (WEFR…IHMT), 112 to 132 (AWMS…LGYV), and 174 to 194 (FFVL…LHIF). Residues His-82 and His-96 each contribute to the heme b site. The heme b site is built by His-178 and His-192. His-197 is an a ubiquinone binding site. 4 helical membrane passes run 219–239 (MLMT…LQAA), 285–305 (GLLV…IRAL), 323–343 (GWVI…SAIP), and 347–367 (YILY…VLCL).

Belongs to the cytochrome b family. The main subunits of complex b-c1 are: cytochrome b, cytochrome c1 and the Rieske protein. Requires heme b as cofactor.

It is found in the mitochondrion inner membrane. Functionally, component of the ubiquinol-cytochrome c reductase complex (complex III or cytochrome b-c1 complex) that is part of the mitochondrial respiratory chain. The b-c1 complex mediates electron transfer from ubiquinol to cytochrome c. Contributes to the generation of a proton gradient across the mitochondrial membrane that is then used for ATP synthesis. This Toxoplasma gondii protein is Cytochrome b (MT-CYB).